Reading from the N-terminus, the 554-residue chain is Hydroxylamine reductase (554 aa).

[2Fe-2S] cluster is bound by residues Cys3, Cys6, Cys18, and Cys25. Residues His252, Glu276, Cys320, Cys408, Cys436, Cys461, Glu495, and Lys497 each coordinate hybrid [4Fe-2O-2S] cluster. The residue at position 408 (Cys408) is a Cysteine persulfide.

This sequence belongs to the HCP family. Requires [2Fe-2S] cluster as cofactor. Hybrid [4Fe-2O-2S] cluster serves as cofactor.

The protein resides in the cytoplasm. The enzyme catalyses A + NH4(+) + H2O = hydroxylamine + AH2 + H(+). Its function is as follows. Catalyzes the reduction of hydroxylamine to form NH(3) and H(2)O. This chain is Hydroxylamine reductase, found in Shewanella loihica (strain ATCC BAA-1088 / PV-4).